The sequence spans 211 residues: Succinate dehydrogenase subunit 4, mitochondrial (211 aa).

Residues 1 to 36 (MASRLLARSKALALALSRADAAAPGPAAGVQWLRTL) constitute a mitochondrion transit peptide. The interval 41 to 64 (RDPAAAASPAPAPRQPAVGSPLGL) is disordered. Residue His-166 participates in heme binding. Tyr-179 contacts a ubiquinone. Residues 188–210 (WVFIYFKILLIIMAKETVVYFDL) traverse the membrane as a helical segment.

Component of complex II composed of eight subunits in plants: four classical SDH subunits SDH1, SDH2, SDH3 and SDH4 (a flavoprotein (FP), an iron-sulfur protein (IP), and a cytochrome b composed of a large and a small subunit.), as well as four subunits unknown in mitochondria from bacteria and heterotrophic eukaryotes. The cofactor is heme.

It localises to the mitochondrion inner membrane. The protein operates within carbohydrate metabolism; tricarboxylic acid cycle. Functionally, membrane-anchoring subunit of succinate dehydrogenase (SDH). The polypeptide is Succinate dehydrogenase subunit 4, mitochondrial (Oryza sativa subsp. japonica (Rice)).